Reading from the N-terminus, the 52-residue chain is Lantibiotic gallidermin (52 aa).

Residues 1–30 (MEAVKEKNELFDLDVKVNAKESNDSGAEPR) constitute a propeptide that is removed on maturation. A cross-link (lanthionine (Ser-Cys)) is located at residues 33 to 37 (SKFLC). The segment at residues 38–41 (TPGC) is a cross-link (beta-methyllanthionine (Thr-Cys)). (Z)-2,3-didehydrobutyrine is present on Thr44. The lanthionine (Ser-Cys) cross-link spans 46-51 (SFNSYC). Positions 49-52 (SYCC) form a cross-link, S-(2-aminovinyl)-D-cysteine (Ser-Cys).

This sequence belongs to the type A lantibiotic family. Post-translationally, maturation of lantibiotics involves the enzymatic conversion of Thr, and Ser into dehydrated AA and the formation of thioether bonds with cysteine. The C-terminal lanthionine undergoes decarboxylation. This is followed by membrane translocation and cleavage of the modified precursor. The structure of the 2,3-didehydrobutyrine is not discussed in PubMed:1932575. However, in Fig. 5 the NMR model appears to have the Z-isomer.

Its function is as follows. Lanthionine-containing peptide antibiotic (lantibiotic) active on Gram-positive bacteria. The bactericidal activity of lantibiotics is based on depolarization of energized bacterial cytoplasmic membranes, initiated by the formation of aqueous transmembrane pores. The polypeptide is Lantibiotic gallidermin (gdmA) (Staphylococcus gallinarum).